The following is a 305-amino-acid chain: Putative E3 ubiquitin-protein ligase SINAT1 (305 aa).

Residues 57–93 (CPVCTNLMYPPIHQCPNGHTLCSSCKLRVQNTCPTCR) form an RING-type zinc finger. Positions 107 to 300 (VAESLEVPCR…EELKLRVTGR (194 aa)) are SBD. The SIAH-type zinc-finger motif lies at 110-170 (SLEVPCRYQN…LVDHLKDDHK (61 aa)). Zn(2+)-binding residues include Cys-115, Cys-122, His-134, Cys-138, Cys-145, Cys-152, His-164, and His-169.

The protein belongs to the SINA (Seven in absentia) family. In terms of assembly, interacts with SINAT6. Interacts with ATG6 and TRAF1A. Interacts with WAV3. Interacts with FREE1. Interacts with ELC/VPS23A.

It is found in the endosome. It localises to the multivesicular body. The protein resides in the cytoplasmic vesicle. The protein localises to the autophagosome. The catalysed reaction is S-ubiquitinyl-[E2 ubiquitin-conjugating enzyme]-L-cysteine + [acceptor protein]-L-lysine = [E2 ubiquitin-conjugating enzyme]-L-cysteine + N(6)-ubiquitinyl-[acceptor protein]-L-lysine.. It participates in protein modification; protein ubiquitination. In terms of biological role, E3 ubiquitin-protein ligase that mediates ubiquitination and subsequent proteasomal degradation of target proteins. E3 ubiquitin ligases accept ubiquitin from an E2 ubiquitin-conjugating enzyme in the form of a thioester and then directly transfers the ubiquitin to targeted substrates. It probably triggers the ubiquitin-mediated degradation of different substrates. Mediates the proteasomal-dependent degradation of ATG6, a component of the autophagosome complex. Requires TRAF1A/MUSE14 and TRAF1B/MUSE13 to target ATG6 for ubiquitination and subsequent regulation of autophagosome assembly. Modulates directly the ubiquitination and proteasomal-dependent degradation of FREE1, a component of the ESCRT-I complex. Modulates directly the ubiquitination and proteasomal-dependent degradation of ELC/VPS23A, a component of the ESCRT-I complex. The polypeptide is Putative E3 ubiquitin-protein ligase SINAT1 (Arabidopsis thaliana (Mouse-ear cress)).